We begin with the raw amino-acid sequence, 138 residues long: Ribulose bisphosphate carboxylase small subunit (138 aa).

The protein belongs to the RuBisCO small chain family. As to quaternary structure, heterohexadecamer of 8 large and 8 small subunits.

Its subcellular location is the plastid. The protein resides in the chloroplast. Functionally, ruBisCO catalyzes two reactions: the carboxylation of D-ribulose 1,5-bisphosphate, the primary event in carbon dioxide fixation, as well as the oxidative fragmentation of the pentose substrate in the photorespiration process. Both reactions occur simultaneously and in competition at the same active site. Although the small subunit is not catalytic it is essential for maximal activity. The sequence is that of Ribulose bisphosphate carboxylase small subunit from Pyropia suborbiculata (Red alga).